The following is a 589-amino-acid chain: Aspartate--tRNA ligase (589 aa).

Glu-172 is a binding site for L-aspartate. The tract at residues 196–199 is aspartate; sequence QLFK. Arg-218 is a binding site for L-aspartate. ATP-binding positions include 218 to 220 and Gln-227; that span reads RDE. His-449 is a binding site for L-aspartate. ATP is bound at residue Glu-483. Arg-490 lines the L-aspartate pocket. 535–538 is an ATP binding site; the sequence is GLDR.

Belongs to the class-II aminoacyl-tRNA synthetase family. Type 1 subfamily. As to quaternary structure, homodimer.

It localises to the cytoplasm. The catalysed reaction is tRNA(Asp) + L-aspartate + ATP = L-aspartyl-tRNA(Asp) + AMP + diphosphate. Catalyzes the attachment of L-aspartate to tRNA(Asp) in a two-step reaction: L-aspartate is first activated by ATP to form Asp-AMP and then transferred to the acceptor end of tRNA(Asp). The protein is Aspartate--tRNA ligase of Haemophilus ducreyi (strain 35000HP / ATCC 700724).